We begin with the raw amino-acid sequence, 290 residues long: Acetylglutamate kinase (290 aa).

Substrate contacts are provided by residues glycine 60 to glycine 61, arginine 82, and asparagine 185.

This sequence belongs to the acetylglutamate kinase family. ArgB subfamily.

The protein resides in the cytoplasm. It carries out the reaction N-acetyl-L-glutamate + ATP = N-acetyl-L-glutamyl 5-phosphate + ADP. It participates in amino-acid biosynthesis; L-arginine biosynthesis; N(2)-acetyl-L-ornithine from L-glutamate: step 2/4. Its function is as follows. Catalyzes the ATP-dependent phosphorylation of N-acetyl-L-glutamate. The protein is Acetylglutamate kinase of Archaeoglobus fulgidus (strain ATCC 49558 / DSM 4304 / JCM 9628 / NBRC 100126 / VC-16).